Here is a 308-residue protein sequence, read N- to C-terminus: Pseudouridine-5'-phosphate glycosidase (308 aa).

Residue Glu29 is the Proton donor of the active site. 2 residues coordinate substrate: Lys90 and Val110. A Mn(2+)-binding site is contributed by Asp142. Substrate is bound at residue 144 to 146; that stretch reads SSD. The active-site Nucleophile is the Lys163.

Belongs to the pseudouridine-5'-phosphate glycosidase family. As to quaternary structure, homotrimer. The cofactor is Mn(2+).

The enzyme catalyses D-ribose 5-phosphate + uracil = psi-UMP + H2O. Its function is as follows. Catalyzes the reversible cleavage of pseudouridine 5'-phosphate (PsiMP) to ribose 5-phosphate and uracil. Functions biologically in the cleavage direction, as part of a pseudouridine degradation pathway. In Serratia proteamaculans (strain 568), this protein is Pseudouridine-5'-phosphate glycosidase.